Here is a 619-residue protein sequence, read N- to C-terminus: Putative zinc metalloprotease CT_072 (619 aa).

H20 contributes to the Zn(2+) binding site. E21 is a catalytic residue. H24 lines the Zn(2+) pocket. 3 helical membrane passes run 103 to 125 (IFVLAAGPLANLLVAIFVFGILY), 558 to 580 (VLNLLPIPVLDGGYILLCLWEIL), and 593 to 610 (ALVPFMILLVLFFVFLTL).

The protein belongs to the peptidase M50B family. Zn(2+) is required as a cofactor.

It is found in the cell inner membrane. This chain is Putative zinc metalloprotease CT_072, found in Chlamydia trachomatis serovar D (strain ATCC VR-885 / DSM 19411 / UW-3/Cx).